Consider the following 182-residue polypeptide: Dihydrofolate reductase (182 aa).

The region spanning 3–180 (RFNLIVAVCE…IKFEYKILEK (178 aa)) is the DHFR domain. NADP(+) contacts are provided by residues alanine 9 and 15-21 (GIGIRGD). 29–34 (ELKYFS) is a binding site for substrate. NADP(+) is bound at residue 53-55 (RKT). Arginine 69 provides a ligand contact to substrate. NADP(+) contacts are provided by residues 75 to 77 (STT) and 113 to 120 (GGSGVYEE).

It belongs to the dihydrofolate reductase family. As to quaternary structure, monomer. Interacts with vg.

The enzyme catalyses (6S)-5,6,7,8-tetrahydrofolate + NADP(+) = 7,8-dihydrofolate + NADPH + H(+). It functions in the pathway cofactor biosynthesis; tetrahydrofolate biosynthesis; 5,6,7,8-tetrahydrofolate from 7,8-dihydrofolate: step 1/1. Functionally, by interacting with vestigial (vg), may control genes involved in DNA replication. Key enzyme in folate metabolism. Catalyzes an essential reaction for de novo glycine and purine synthesis, and for DNA precursor synthesis. The sequence is that of Dihydrofolate reductase (Dhfr) from Drosophila melanogaster (Fruit fly).